The sequence spans 260 residues: Indole-3-glycerol phosphate synthase (260 aa).

This sequence belongs to the TrpC family.

It carries out the reaction 1-(2-carboxyphenylamino)-1-deoxy-D-ribulose 5-phosphate + H(+) = (1S,2R)-1-C-(indol-3-yl)glycerol 3-phosphate + CO2 + H2O. It functions in the pathway amino-acid biosynthesis; L-tryptophan biosynthesis; L-tryptophan from chorismate: step 4/5. In Staphylococcus saprophyticus subsp. saprophyticus (strain ATCC 15305 / DSM 20229 / NCIMB 8711 / NCTC 7292 / S-41), this protein is Indole-3-glycerol phosphate synthase.